Consider the following 211-residue polypeptide: Transcription factor bHLH150 (211 aa).

The span at 1 to 15 (MSSEQGNGSNPSTSP) shows a compositional bias: polar residues. Residues 1–23 (MSSEQGNGSNPSTSPEVEGTKTI) form a disordered region. The region spanning 135–184 (AIRGSGGSGRRRKLSAVGNRVRVLGGLVPGCRRTALPELLDETADYIAAL) is the bHLH domain.

Homodimer. Interacts with PRE3 and ASK7. In terms of processing, phosphorylated by ASK7.

Its subcellular location is the nucleus. Functionally, atypical bHLH transcription factor probably unable to bind DNA. Negatively regulates brassinosteroid signaling. The polypeptide is Transcription factor bHLH150 (BHLH150) (Arabidopsis thaliana (Mouse-ear cress)).